Consider the following 136-residue polypeptide: NHL-repeat-containing protein 4 (136 aa).

NHL repeat units follow at residues Gln48 to Val91 and Pro93 to Leu132.

The polypeptide is NHL-repeat-containing protein 4 (Nhlrc4) (Mus musculus (Mouse)).